The primary structure comprises 272 residues: uncharacterized protein (272 aa).

Basic and acidic residues-rich tracts occupy residues 136-156 (VRRE…HIDI) and 231-240 (GCKESRRNEP). 2 disordered regions span residues 136–157 (VRRE…IDIH) and 174–272 (VKPK…WAAF). The span at 243 to 252 (DLSQLKKNLP) shows a compositional bias: polar residues. Positions 253–272 (STAGSGSSKSTGAASGWAAF) are enriched in low complexity.

This is an uncharacterized protein from Arabidopsis thaliana (Mouse-ear cress).